A 122-amino-acid chain; its full sequence is Large ribosomal subunit protein uL14c (122 aa).

It belongs to the universal ribosomal protein uL14 family. In terms of assembly, part of the 50S ribosomal subunit.

The protein resides in the plastid. Its subcellular location is the chloroplast. Functionally, binds to 23S rRNA. The sequence is that of Large ribosomal subunit protein uL14c from Phalaenopsis aphrodite subsp. formosana (Moth orchid).